Here is a 105-residue protein sequence, read N- to C-terminus: Replication initiation control protein YabA (105 aa).

Zn(2+)-binding residues include H79, C81, C95, and C98.

The protein belongs to the YabA family. Homotetramer. Interacts with both DnaA and DnaN, acting as a bridge between these two proteins. It depends on Zn(2+) as a cofactor.

Its subcellular location is the cytoplasm. The protein localises to the nucleoid. Involved in control of chromosome replication initiation. Inhibits the cooperative binding of DnaA to the oriC region, thus negatively regulating initiation of chromosome replication. Inhibits the ability of DnaA-ATP to form a helix on DNA; does not disassemble preformed DnaA-DNA helices. Decreases the residence time of DnaA on the chromosome at its binding sites (oriC, replication forks and promoter-binding sites). Tethers DnaA to the replication machinery via the DNA polymerase beta sliding clamp subunit (dnaN). Associates with oriC and other DnaA targets on the chromosome in a DnaA-dependent manner. In Streptococcus sanguinis (strain SK36), this protein is Replication initiation control protein YabA.